The sequence spans 199 residues: V-type proton ATPase subunit E (199 aa).

Belongs to the V-ATPase E subunit family.

Functionally, produces ATP from ADP in the presence of a proton gradient across the membrane. This Clostridium botulinum (strain Okra / Type B1) protein is V-type proton ATPase subunit E.